Here is a 106-residue protein sequence, read N- to C-terminus: Cytochrome c2 (106 aa).

Positions 19, 22, 23, and 84 each coordinate heme c.

It belongs to the cytochrome c family. In terms of processing, binds 1 heme c group covalently per subunit.

This Rhodopila globiformis (Rhodopseudomonas globiformis) protein is Cytochrome c2.